Reading from the N-terminus, the 131-residue chain is Small ribosomal subunit protein uS8 (131 aa).

The protein belongs to the universal ribosomal protein uS8 family. As to quaternary structure, part of the 30S ribosomal subunit. Contacts proteins S5 and S12.

Functionally, one of the primary rRNA binding proteins, it binds directly to 16S rRNA central domain where it helps coordinate assembly of the platform of the 30S subunit. The polypeptide is Small ribosomal subunit protein uS8 (Campylobacter jejuni subsp. doylei (strain ATCC BAA-1458 / RM4099 / 269.97)).